A 240-amino-acid polypeptide reads, in one-letter code: Large ribosomal subunit protein bL25 (240 aa).

Positions methionine 1–glutamate 23 are disordered. A compositionally biased stretch (low complexity) spans threonine 10–alanine 19.

It belongs to the bacterial ribosomal protein bL25 family. CTC subfamily. In terms of assembly, part of the 50S ribosomal subunit; part of the 5S rRNA/L5/L18/L25 subcomplex. Contacts the 5S rRNA. Binds to the 5S rRNA independently of L5 and L18.

Its function is as follows. This is one of the proteins that binds to the 5S RNA in the ribosome where it forms part of the central protuberance. The polypeptide is Large ribosomal subunit protein bL25 (Afipia carboxidovorans (strain ATCC 49405 / DSM 1227 / KCTC 32145 / OM5) (Oligotropha carboxidovorans)).